Here is a 285-residue protein sequence, read N- to C-terminus: Methyltransferase grgD (285 aa).

This sequence belongs to the methyltransferase superfamily. LaeA methyltransferase family.

It participates in secondary metabolite biosynthesis. Functionally, methyltransferase; part of the gene cluster that mediates the biosynthesis of gregatin A, a fungal polyketide featuring an alkylated furanone core. The PKS grgA synthesizes C11 and C4 polyketide chains in the presence and absence of the trans-enoyl reductase grgB, respectively. The polyketide transferase grgF is then responsible for the fusion of the two carbon chains to produce the furanone skeleton of gregatin A. Next, the cytochrome P450 monooxygenase grgG accepts performs the oxidative cyclization to furnish the gregatin scaffold and leads to the formation of desmethylgregatin A. Finally, the O-methyltransferase grgD methylates the carboxyl group of desmethylgregatin A to provide gregatin A. The polypeptide is Methyltransferase grgD (Penicillium sp).